The sequence spans 135 residues: UPF0355 protein SH2586 (135 aa).

The interval 105-135 (NSSHDEVEENNSAYEEIDITHYANESKGPKS) is disordered.

Belongs to the UPF0355 family.

This Staphylococcus haemolyticus (strain JCSC1435) protein is UPF0355 protein SH2586.